Here is a 290-residue protein sequence, read N- to C-terminus: Small ribosomal subunit biogenesis GTPase RsgA (290 aa).

The CP-type G domain maps to 61–218 (KSELVRPTVA…IVDTPGFSTL (158 aa)). Residues 110 to 113 (NKID) and 161 to 169 (GPSGAGKST) contribute to the GTP site. 4 residues coordinate Zn(2+): Cys243, Cys248, His250, and Cys256.

This sequence belongs to the TRAFAC class YlqF/YawG GTPase family. RsgA subfamily. As to quaternary structure, monomer. Associates with 30S ribosomal subunit, binds 16S rRNA. Zn(2+) is required as a cofactor.

Its subcellular location is the cytoplasm. One of several proteins that assist in the late maturation steps of the functional core of the 30S ribosomal subunit. Helps release RbfA from mature subunits. May play a role in the assembly of ribosomal proteins into the subunit. Circularly permuted GTPase that catalyzes slow GTP hydrolysis, GTPase activity is stimulated by the 30S ribosomal subunit. The chain is Small ribosomal subunit biogenesis GTPase RsgA from Clostridium beijerinckii (strain ATCC 51743 / NCIMB 8052) (Clostridium acetobutylicum).